Here is a 202-residue protein sequence, read N- to C-terminus: Endothelin-1 (202 aa).

Positions 1-25 (MDYFPVIFSLLFVTFQGAPETAVLG) are cleaved as a signal peptide. Residues 26 to 50 (AELSTGAENGVQSPPPSTPWRPRRS) constitute a propeptide that is removed on maturation. 2 disulfides stabilise this stretch: cysteine 53-cysteine 67 and cysteine 55-cysteine 63. Positions 74–202 (VNTPERVVPY…DQKLTHNRAH (129 aa)) are excised as a propeptide. Residues 110-124 (CQCAHQKDKKCWNFC) form an endothelin-like region.

Belongs to the endothelin/sarafotoxin family. Highest expression in the adult is in lung. Lower levels found in heart, kidney, brain and intestine. In the embryo, expressed in outer and inner pharyngeal arch surfaces. Also expressed in endothelium of dorsal aorta and arch arteries, and in epithelium of pharyngeal pouches.

It localises to the secreted. Its function is as follows. Endothelins are endothelium-derived vasoconstrictor peptides. Probable ligand for G-protein coupled receptors EDNRA and EDNRB which activates PTK2B, BCAR1, BCAR3 and, GTPases RAP1 and RHOA cascade in glomerular mesangial cells. Also binds the DEAR/FBXW7-AS1 receptor. Promotes mesenteric arterial wall remodeling via activation of ROCK signaling and subsequent colocalization of NFATC3 with F-actin filaments. NFATC3 then translocates to the nucleus where it subsequently promotes the transcription of the smooth muscle hypertrophy and differentiation marker ACTA2. The sequence is that of Endothelin-1 (Edn1) from Mus musculus (Mouse).